Here is a 409-residue protein sequence, read N- to C-terminus: Na(+)/H(+) antiporter NhaA (409 aa).

The next 11 membrane-spanning stretches (helical) occupy residues 13–33 (SGGI…NTFL), 58–78 (LILW…GLEL), 93–113 (IALP…IFYL), 120–140 (FALG…LGIL), 153–173 (IFLM…IALF), 176–196 (SELS…LFAL), 216–236 (VAVL…AFFI), 256–276 (LHGW…AGIS), 279–299 (GVGL…GLFV), 326–346 (FIQL…SLFI), and 363–383 (LAIL…LKFS).

The protein belongs to the NhaA Na(+)/H(+) (TC 2.A.33) antiporter family.

Its subcellular location is the cell inner membrane. The catalysed reaction is Na(+)(in) + 2 H(+)(out) = Na(+)(out) + 2 H(+)(in). Functionally, na(+)/H(+) antiporter that extrudes sodium in exchange for external protons. The polypeptide is Na(+)/H(+) antiporter NhaA (Campylobacter concisus (strain 13826)).